The chain runs to 261 residues: Adenosylcobinamide-GDP ribazoletransferase (261 aa).

A run of 7 helical transmembrane segments spans residues 4–26 (GLNGLLLAFQFLTTVPITRQIPW), 40–60 (LTGLVLGGLLVSLYLLLSPFL), 62–82 (PLVLAALLVTLSIFYSGGLHL), 110–130 (VGAFAVMTTILLIGWKVLLLM), 140–160 (FTWLLLLVPVCLRWMIIVQLI), 197–217 (CFLLLQNVILTLCFLLMIWLF), and 237–257 (IGASIEGGELFLWGIMWTFFL).

Belongs to the CobS family. It depends on Mg(2+) as a cofactor.

The protein resides in the cell membrane. It carries out the reaction alpha-ribazole + adenosylcob(III)inamide-GDP = adenosylcob(III)alamin + GMP + H(+). It catalyses the reaction alpha-ribazole 5'-phosphate + adenosylcob(III)inamide-GDP = adenosylcob(III)alamin 5'-phosphate + GMP + H(+). Its pathway is cofactor biosynthesis; adenosylcobalamin biosynthesis; adenosylcobalamin from cob(II)yrinate a,c-diamide: step 7/7. Functionally, joins adenosylcobinamide-GDP and alpha-ribazole to generate adenosylcobalamin (Ado-cobalamin). Also synthesizes adenosylcobalamin 5'-phosphate from adenosylcobinamide-GDP and alpha-ribazole 5'-phosphate. This is Adenosylcobinamide-GDP ribazoletransferase from Halalkalibacterium halodurans (strain ATCC BAA-125 / DSM 18197 / FERM 7344 / JCM 9153 / C-125) (Bacillus halodurans).